We begin with the raw amino-acid sequence, 345 residues long: Biotin synthase (345 aa).

The region spanning 59-286 is the Radical SAM core domain; the sequence is NEVQLSTLLS…TTMVRLSAGR (228 aa). [4Fe-4S] cluster is bound by residues Cys74, Cys78, and Cys81. [2Fe-2S] cluster-binding residues include Cys118, Cys149, Cys209, and Arg281.

It belongs to the radical SAM superfamily. Biotin synthase family. Homodimer. Requires [4Fe-4S] cluster as cofactor. [2Fe-2S] cluster serves as cofactor.

It catalyses the reaction (4R,5S)-dethiobiotin + (sulfur carrier)-SH + 2 reduced [2Fe-2S]-[ferredoxin] + 2 S-adenosyl-L-methionine = (sulfur carrier)-H + biotin + 2 5'-deoxyadenosine + 2 L-methionine + 2 oxidized [2Fe-2S]-[ferredoxin]. The protein operates within cofactor biosynthesis; biotin biosynthesis; biotin from 7,8-diaminononanoate: step 2/2. Its function is as follows. Catalyzes the conversion of dethiobiotin (DTB) to biotin by the insertion of a sulfur atom into dethiobiotin via a radical-based mechanism. This Leptothrix cholodnii (strain ATCC 51168 / LMG 8142 / SP-6) (Leptothrix discophora (strain SP-6)) protein is Biotin synthase.